A 305-amino-acid polypeptide reads, in one-letter code: Ribonuclease BN (305 aa).

Residues histidine 64, histidine 66, aspartate 68, histidine 69, histidine 141, aspartate 212, and histidine 270 each coordinate Zn(2+). Aspartate 68 (proton acceptor) is an active-site residue.

Belongs to the RNase Z family. RNase BN subfamily. In terms of assembly, homodimer. It depends on Zn(2+) as a cofactor.

Its function is as follows. Zinc phosphodiesterase, which has both exoribonuclease and endoribonuclease activities. The protein is Ribonuclease BN of Salmonella gallinarum (strain 287/91 / NCTC 13346).